Reading from the N-terminus, the 1448-residue chain is MAHSKAKGNDGKITYPPGVKEISDKISKEEMVRRLKMVVKTFMDMDQDSEEEKEQYLNLALHLASDFFLKHPDKDVRLLVACCLADIFRIYAPEAPYTSPDKLKDIFMFISRQLKGLEDTKSPQFNRYFYLLENIAWVKSYNICFELEDSNEIFTQLYRTLFSVINNGHNQKVHMHMVDLMSSIVCEGDTVSQELLDSVLVNLVPAHKNLNKQAYDLAKALLKRTAQAIEPYITNFFNQVLMLGKTSISDLSEHVFDLILELYNIDSHLLLSVLPQLEFKLKSNDNEERLQVVKLLAKMFGAKDSELASQNKTLWQCYLGRFNDIHVPVRLECVKFASHSLVNHPDLAKDLTDYLKVRSHDPEEAIRHDVIVSIVTAAKKDLLLVNDQLLNFVRERTLDKRWRVRKEAMMGLAQIYKKYSLQAEAGKESAKQISWIKDKLLHIYYQNSIDDRLLVERIFAQYMVPHNLETTERMKCLYYLYATLDTNAVKALNEMWKCQNMLRHHVKDLLDLIKKPKTEAGSKAIFSKVMVITRNLPDPGKGQDFLKKFTQVLEDDEKIRGQLEKLVSPTCSCKQAEVCVRDITKKLGNPKQPTNPFLEMIKFLLERIAPVHIDTESISALIKLVNKSIDGTADDEDEGVTTDQAIRAGLELLKVLSFTHPISFHSAETFESLLACLKMDDEKVAEAALQIFKNTGSKIEEDFPHIRSALLPVLQQKAKKGPPRQAKYSIHCIQAIFSSKETQFAQIFEPLHKSLDPGNPEQLITSLVSIGHIAQLAPDQFTAPLKSMVATFVVKDLLMTDRLPGKKTTKLWVSDDEVSTETKVKIQAIKMMVRWLLGMKNNLSKSGNSTLRLLMAILHTDGDLTEHGKLSKPDMSRLRLAAASAIVKLAQEPCYHEIITLEQYQLCALVINDECYQVRQLFAQKIHKGLSRLRLPLEYMAICALCAKDPVKERRAHARQCLVKNINVRREYLKQHAAVSEKLFSLLPEYVVPYTVHLLAHDPDYVKVQDIEQLKDIKECLWFVLEILMSKNENNSHAFIRKMVEYIKQTKDGQNPDDQKMNEKMYTVCDVAMNIIISKSTTYSLESPKDPVLPARFFTQPDKNFSNTKNYLPAELKSFFTPGKPKSTNVLGAVNKPLSSAGKQMLSKSSRMETVSNASSGSNPSSPGKIKGRLDSMELDQSENEDYTMSSPLSGKKSDKRDDSDLLKSELEKPRRGKKQSLIDQDDSLSMDELSKPAQEPKSRTGQRGRKRAAAASDSEEQTWQEKRLKEDLLENEDEQNSPPKKGRRGRPPKSAKMAISKEEPTVTTPKRGRKKAVPVESPPTDEDDHLEISEEQDFENIDQKRKGRGSSRRTPQKSDSTDSLLDTSRPTPQKRRGRPPKTPTVQQKKSHVGRPRKVVSKEPESEEEMEMSQNSPALSEHLSNEDESAEEVVVAPSTGRLRSAKKR.

One copy of the HEAT repeat lies at 383–419 (LLVNDQLLNFVRERTLDKRWRVRKEAMMGLAQIYKKY). Residues 1141 to 1155 (AGKQMLSKSSRMETV) show a composition bias toward polar residues. Positions 1141–1448 (AGKQMLSKSS…TGRLRSAKKR (308 aa)) are disordered. Residues 1156-1168 (SNASSGSNPSSPG) show a composition bias toward low complexity. Over residues 1177–1186 (MELDQSENED) the composition is skewed to acidic residues. Composition is skewed to basic and acidic residues over residues 1196–1214 (KKSDKRDDSDLLKSELEKP), 1233–1243 (ELSKPAQEPKS), and 1264–1273 (WQEKRLKEDL). Residues 1285 to 1294 (KKGRRGRPPK) are compositionally biased toward basic residues. A DNA-binding region (a.T hook 1) is located at residues 1286–1298 (KGRRGRPPKSAKM). The segment covering 1324–1341 (PTDEDDHLEISEEQDFEN) has biased composition (acidic residues). The span at 1346-1356 (RKGRGSSRRTP) shows a compositional bias: basic residues. DNA-binding regions (a.T hook) lie at residues 1374–1386 (QKRRGRPPKTPTV) and 1390–1402 (KSHVGRPRKVVSK). Basic residues predominate over residues 1389 to 1399 (KKSHVGRPRKV).

It belongs to the PDS5 family. As to quaternary structure, interacts with the cohesin complex. Post-translationally, phosphorylated in mitotic cells.

The protein localises to the nucleus. In terms of biological role, plays a role in androgen-induced proliferative arrest. Required for maintenance of sister chromatid cohesion during mitosis. The protein is Sister chromatid cohesion protein PDS5 homolog B-A (pds5b-a) of Xenopus laevis (African clawed frog).